The following is a 191-amino-acid chain: Pyridoxal 5'-phosphate synthase subunit PdxT (191 aa).

46 to 48 (GES) is a binding site for L-glutamine. Cys-78 (nucleophile) is an active-site residue. L-glutamine contacts are provided by residues Arg-105 and 134-135 (IR). Catalysis depends on charge relay system residues His-170 and Glu-172.

The protein belongs to the glutaminase PdxT/SNO family. In the presence of PdxS, forms a dodecamer of heterodimers. Only shows activity in the heterodimer.

The enzyme catalyses aldehydo-D-ribose 5-phosphate + D-glyceraldehyde 3-phosphate + L-glutamine = pyridoxal 5'-phosphate + L-glutamate + phosphate + 3 H2O + H(+). It carries out the reaction L-glutamine + H2O = L-glutamate + NH4(+). It functions in the pathway cofactor biosynthesis; pyridoxal 5'-phosphate biosynthesis. Catalyzes the hydrolysis of glutamine to glutamate and ammonia as part of the biosynthesis of pyridoxal 5'-phosphate. The resulting ammonia molecule is channeled to the active site of PdxS. The protein is Pyridoxal 5'-phosphate synthase subunit PdxT of Carboxydothermus hydrogenoformans (strain ATCC BAA-161 / DSM 6008 / Z-2901).